A 375-amino-acid polypeptide reads, in one-letter code: tRNA-specific 2-thiouridylase MnmA (375 aa).

Residues 8–15 (GLSGGVDS) and Met34 contribute to the ATP site. The interaction with target base in tRNA stretch occupies residues 104–106 (NPD). Residue Cys109 is the Nucleophile of the active site. Cys109 and Cys208 are joined by a disulfide. Gly134 provides a ligand contact to ATP. Residues 158 to 160 (KDQ) are interaction with tRNA. Cys208 (cysteine persulfide intermediate) is an active-site residue. The segment at 321-322 (RY) is interaction with tRNA.

The protein belongs to the MnmA/TRMU family.

The protein resides in the cytoplasm. The catalysed reaction is S-sulfanyl-L-cysteinyl-[protein] + uridine(34) in tRNA + AH2 + ATP = 2-thiouridine(34) in tRNA + L-cysteinyl-[protein] + A + AMP + diphosphate + H(+). Catalyzes the 2-thiolation of uridine at the wobble position (U34) of tRNA, leading to the formation of s(2)U34. The sequence is that of tRNA-specific 2-thiouridylase MnmA from Mycoplasma mycoides subsp. mycoides SC (strain CCUG 32753 / NCTC 10114 / PG1).